The chain runs to 202 residues: GTP cyclohydrolase 1 (202 aa).

Cys90, His93, and Cys163 together coordinate Zn(2+).

The protein belongs to the GTP cyclohydrolase I family. Toroid-shaped homodecamer, composed of two pentamers of five dimers.

The catalysed reaction is GTP + H2O = 7,8-dihydroneopterin 3'-triphosphate + formate + H(+). It participates in cofactor biosynthesis; 7,8-dihydroneopterin triphosphate biosynthesis; 7,8-dihydroneopterin triphosphate from GTP: step 1/1. This is GTP cyclohydrolase 1 (folE) from Mycobacterium bovis (strain ATCC BAA-935 / AF2122/97).